Consider the following 150-residue polypeptide: Transcriptional repressor NrdR (150 aa).

The segment at 3–34 is a zinc-finger region; sequence CPFCGQLDSKVVDSRPDKGGAAIRRRRECESC. In terms of domain architecture, ATP-cone spans 49–139; the sequence is PLVLKKDGRR…VYRSFKDVNE (91 aa).

Belongs to the NrdR family. Zn(2+) serves as cofactor.

Negatively regulates transcription of bacterial ribonucleotide reductase nrd genes and operons by binding to NrdR-boxes. In Geobacter sulfurreducens (strain ATCC 51573 / DSM 12127 / PCA), this protein is Transcriptional repressor NrdR.